The primary structure comprises 420 residues: Gamma-glutamyl phosphate reductase (420 aa).

Belongs to the gamma-glutamyl phosphate reductase family.

The protein localises to the cytoplasm. The catalysed reaction is L-glutamate 5-semialdehyde + phosphate + NADP(+) = L-glutamyl 5-phosphate + NADPH + H(+). It participates in amino-acid biosynthesis; L-proline biosynthesis; L-glutamate 5-semialdehyde from L-glutamate: step 2/2. In terms of biological role, catalyzes the NADPH-dependent reduction of L-glutamate 5-phosphate into L-glutamate 5-semialdehyde and phosphate. The product spontaneously undergoes cyclization to form 1-pyrroline-5-carboxylate. The chain is Gamma-glutamyl phosphate reductase from Neisseria meningitidis serogroup C / serotype 2a (strain ATCC 700532 / DSM 15464 / FAM18).